A 505-amino-acid polypeptide reads, in one-letter code: Olfactomedin-4 (505 aa).

A signal peptide spans 1–18 (MSYSLLFLLALQFCLGSA). 2 N-linked (GlcNAc...) asparagine glycosylation sites follow: asparagine 64 and asparagine 128. Residues 174–225 (HIIDMLEVEIRNMTLLVEKLESLDQNNVLSIRRQILALKTKLKECEASKSDL) are a coiled coil. The Olfactomedin-like domain occupies 237–499 (SCSHGGVVNI…LLNYDLVFLQ (263 aa)). Residues cysteine 238 and cysteine 429 are joined by a disulfide bond.

As to quaternary structure, homomultimer; disulfide-linked. Interacts with NDUFA13. Interacts with cell surface lectins (locutions ricinus communis agglutinin I, concanavalin A and wheat germ agglutinin) and cadherin. Post-translationally, N-glycosylated.

It is found in the secreted. The protein localises to the extracellular space. It localises to the mitochondrion. Its function is as follows. May promote proliferation of pancreatic cancer cells by favoring the transition from the S to G2/M phase. In myeloid leukemic cell lines, inhibits cell growth and induces cell differentiation and apoptosis. May play a role in the inhibition of EIF4EBP1 phosphorylation/deactivation. Facilitates cell adhesion, most probably through interaction with cell surface lectins and cadherin. The chain is Olfactomedin-4 (Olfm4) from Mus musculus (Mouse).